Consider the following 41-residue polypeptide: Photosystem II reaction center protein L (41 aa).

The helical transmembrane segment at 20 to 40 (SLYLGLLLVFVVGLLFSSYFL) threads the bilayer.

This sequence belongs to the PsbL family. PSII is composed of 1 copy each of membrane proteins PsbA, PsbB, PsbC, PsbD, PsbE, PsbF, PsbH, PsbI, PsbJ, PsbK, PsbL, PsbM, PsbT, PsbX, PsbY, PsbZ, Psb30/Ycf12, peripheral proteins PsbO, CyanoQ (PsbQ), PsbU, PsbV and a large number of cofactors. It forms dimeric complexes.

Its subcellular location is the cellular thylakoid membrane. Its function is as follows. One of the components of the core complex of photosystem II (PSII). PSII is a light-driven water:plastoquinone oxidoreductase that uses light energy to abstract electrons from H(2)O, generating O(2) and a proton gradient subsequently used for ATP formation. It consists of a core antenna complex that captures photons, and an electron transfer chain that converts photonic excitation into a charge separation. This subunit is found at the monomer-monomer interface and is required for correct PSII assembly and/or dimerization. This Synechococcus sp. (strain JA-3-3Ab) (Cyanobacteria bacterium Yellowstone A-Prime) protein is Photosystem II reaction center protein L.